The sequence spans 315 residues: 1-aminocyclopropane-1-carboxylate oxidase 1 (315 aa).

The Fe2OG dioxygenase domain occupies 153–253; the sequence is PNFGTKVSNY…RMSLASFYNP (101 aa). Residues H177, D179, and H234 each contribute to the Fe cation site.

It belongs to the iron/ascorbate-dependent oxidoreductase family. It depends on Fe cation as a cofactor. Predominantly expressed in the petals and the stigma and style.

The enzyme catalyses 1-aminocyclopropane-1-carboxylate + L-ascorbate + O2 = ethene + L-dehydroascorbate + hydrogen cyanide + CO2 + 2 H2O. The protein operates within alkene biosynthesis; ethylene biosynthesis via S-adenosyl-L-methionine; ethylene from S-adenosyl-L-methionine: step 2/2. The protein is 1-aminocyclopropane-1-carboxylate oxidase 1 (ACO1) of Solanum lycopersicum (Tomato).